A 576-amino-acid polypeptide reads, in one-letter code: M-phase inducer phosphatase 2 (576 aa).

S42 bears the Phosphoserine mark. Positions 90 to 105 are enriched in low complexity; that stretch reads RRTSECSLSSESSESS. Positions 90-119 are disordered; sequence RRTSECSLSSESSESSDAGLCMDSPSPVDP. Phosphoserine; by MELK is present on S167. S248 bears the Phosphoserine mark. At S321 the chain carries Phosphoserine; by MELK and MAPK14. The interval 338-358 is disordered; that stretch reads QDRDVPVQSKRRKSVTPLEEQ. S351 carries the phosphoserine; by AURKA modification. At S372 the chain carries Phosphoserine; by BRSK1 and MAPK14. The Rhodanese domain occupies 427–534; sequence IVEKFVIVDC…FFPQHPNFCE (108 aa). C483 is an active-site residue. S559 bears the Phosphoserine mark.

Belongs to the MPI phosphatase family. In terms of assembly, interacts with MAPK14 and 14-3-3 proteins. Phosphorylated by BRSK1 in vitro. Phosphorylated by CHEK1, which inhibits the activity of this protein. Phosphorylation at Ser-351 by AURKA might locally participate in the control of the onset of mitosis. Phosphorylation by MELK at Ser-167 promotes localization to the centrosome and the spindle poles during mitosis. Phosphorylation at Ser-321 and Ser-372 by MAPK14 is required for binding to 14-3-3 proteins. As to expression, expressed predominantly in spleen, lung, heart, brain, intestine, and muscle.

The protein resides in the cytoplasm. It localises to the cytoskeleton. It is found in the microtubule organizing center. Its subcellular location is the centrosome. The protein localises to the spindle pole. The catalysed reaction is O-phospho-L-tyrosyl-[protein] + H2O = L-tyrosyl-[protein] + phosphate. Stimulated by B-type cyclins. Its function is as follows. Tyrosine protein phosphatase which functions as a dosage-dependent inducer of mitotic progression. Directly dephosphorylates CDK1 and stimulates its kinase activity. Required for G2/M phases of the cell cycle progression and abscission during cytokinesis in a ECT2-dependent manner. The three isoforms seem to have a different level of activity. This chain is M-phase inducer phosphatase 2 (Cdc25b), found in Mus musculus (Mouse).